Consider the following 185-residue polypeptide: Large ribosomal subunit protein bL25 (185 aa).

This sequence belongs to the bacterial ribosomal protein bL25 family. CTC subfamily. Part of the 50S ribosomal subunit; part of the 5S rRNA/L5/L18/L25 subcomplex. Contacts the 5S rRNA. Binds to the 5S rRNA independently of L5 and L18.

Its function is as follows. This is one of the proteins that binds to the 5S RNA in the ribosome where it forms part of the central protuberance. The protein is Large ribosomal subunit protein bL25 of Chlamydia abortus (strain DSM 27085 / S26/3) (Chlamydophila abortus).